A 307-amino-acid chain; its full sequence is Lipid droplet-associated hydrolase (307 aa).

The Nucleophile role is filled by Ser-119. A potential amphipathic helix required for binding to lipid droplets region spans residues 157-200; it reads GWVFTKVAMPLYSVFGYIFFSFFNFLPVWLRLMLIQIYFLIFSI. 2 helical membrane passes run 166–186 and 188–208; these read PLYS…PVWL and LMLI…LGTA. Catalysis depends on charge relay system residues Asp-254 and His-283.

Belongs to the AB hydrolase superfamily. LDAH family. Interacts with the juvenile hormone hydrolase enzymes Jheh1 and Jheh2. Also interacts with Hmu, Cpr, Gp93 and Pvr. In terms of tissue distribution, expressed in accessory glands.

It is found in the lipid droplet. The protein localises to the endoplasmic reticulum membrane. The enzyme catalyses a cholesterol ester + H2O = cholesterol + a fatty acid + H(+). Probable serine lipid hydrolase associated with lipid droplets. Appears to lack or have very low cholesterol esterase activity. Appears to lack triglyceride lipase activity. Involved in cholesterol and triglyceride homeostasis; stimulates cellular triglyceride accumulation and cellular cholesterol release. Involved in negatively regulating juvenile hormone (JH) and possibly, insulin signaling activities such as triacylglycerols (TAG) storage, and thereby plays a role in the endocrine regulation of organismal growth and survival. Likely functions by enhancing the activity of the JH hydrolase enzymes Jheh1 and Jheh2. Required for lipid droplet positioning and fat storage. This chain is Lipid droplet-associated hydrolase, found in Drosophila melanogaster (Fruit fly).